Reading from the N-terminus, the 133-residue chain is Lanmodulin (133 aa).

An N-terminal signal peptide occupies residues M1–A21. Residues D35, D37, D39, T41, E46, D59, D61, D63, T65, E70, D84, D86, D88, T90, E95, N108, D110, D112, T114, and E119 each contribute to the Nd(3+) site. EF-hand domains follow at residues D35 to E46, D59 to E70, D84 to E95, and N108 to E119.

Monomer.

It is found in the periplasm. Its function is as follows. High-affinity lanthanide (Ln)-binding protein. Shows 100 million-fold selectivity for La(3+) over Ca(2+). Binds 3 equiv of Ln(3+) with picomolar affinity and a fourth with approximately micromolar affinity. May be involved in receiving and then transporting lanthanides (such as La(3+), Nd(3+) and Sm(3+)) to a specific periplasmic destination. The polypeptide is Lanmodulin (Methylorubrum extorquens (strain ATCC 14718 / DSM 1338 / JCM 2805 / NCIMB 9133 / AM1) (Methylobacterium extorquens)).